Reading from the N-terminus, the 900-residue chain is Bifunctional uridylyltransferase/uridylyl-removing enzyme (900 aa).

Residues methionine 1–proline 342 are uridylyltransferase. Residues leucine 343–serine 705 form a uridylyl-removing region. One can recognise an HD domain in the interval valine 461 to leucine 583. ACT domains follow at residues glutamine 706 to arginine 789 and valine 816 to arginine 891.

Belongs to the GlnD family. It depends on Mg(2+) as a cofactor.

It catalyses the reaction [protein-PII]-L-tyrosine + UTP = [protein-PII]-uridylyl-L-tyrosine + diphosphate. It carries out the reaction [protein-PII]-uridylyl-L-tyrosine + H2O = [protein-PII]-L-tyrosine + UMP + H(+). With respect to regulation, uridylyltransferase (UTase) activity is inhibited by glutamine, while glutamine activates uridylyl-removing (UR) activity. Modifies, by uridylylation and deuridylylation, the PII regulatory proteins (GlnB and homologs), in response to the nitrogen status of the cell that GlnD senses through the glutamine level. Under low glutamine levels, catalyzes the conversion of the PII proteins and UTP to PII-UMP and PPi, while under higher glutamine levels, GlnD hydrolyzes PII-UMP to PII and UMP (deuridylylation). Thus, controls uridylylation state and activity of the PII proteins, and plays an important role in the regulation of nitrogen assimilation and metabolism. The protein is Bifunctional uridylyltransferase/uridylyl-removing enzyme of Pseudomonas aeruginosa (strain UCBPP-PA14).